A 291-amino-acid chain; its full sequence is Oxidative stress-responsive serine-rich protein 1 (291 aa).

Residues 44–139 (RTTVDDTKPK…STGENSTSLD (96 aa)) form a disordered region. Over residues 65–83 (STRKSSRGAVRIQRRRRSK) the composition is skewed to basic residues. 2 stretches are compositionally biased toward polar residues: residues 95–113 (CSTTASPSSSQLKQRSQTE) and 127–139 (KEFSTGENSTSLD). T143 is modified (phosphothreonine).

As to expression, ubiquitous with high level in testis, placenta and cardiac myocytes. In terms of tissue distribution, expressed in testis, unpreganant uterus and cardiac myocytes.

The sequence is that of Oxidative stress-responsive serine-rich protein 1 (Oser1) from Rattus norvegicus (Rat).